The following is a 429-amino-acid chain: MIDPNLLRNNLAEVAEKLKVKRNFMLDTEKLTALEDQRKNLQVTTENLQAERNARSKAIGAAKARGEDIAPLLAEMDDMGNQLTEAKAQLDAVLAEINQIALSIPNLPADEVPLGKDDTENKEILRWGTPRTFDFEVKDHVTLGEEANGLDFAAGAKLTGARFAVMKGQIAKMHRALAQFMLDLHTEQHGYLETYVPYLVNHATLYGTGQLPKFGEDLFHTLALQGEQPYALIPTAEVPVTNLVRDVIIDEAELPIKMTAHTPCFRSEAGSYGRDTRGLIRMHQFDKVEMVQIVDPDKSMEALEELTGHAEKVLQLLNLPYRKVLLCTGDMGFGSCKTYDLEVWVPAQNTYREISSCSNMWDFQARRMQARCKAKGDKKTHLVHTLNGSGLAVGRTLVAVLENYQNADGSITVPEVLRPYMGGLDVIGK.

235–237 (TAE) is a binding site for L-serine. 266–268 (RSE) provides a ligand contact to ATP. Glu289 serves as a coordination point for L-serine. 353–356 (EISS) lines the ATP pocket. Position 389 (Ser389) interacts with L-serine.

It belongs to the class-II aminoacyl-tRNA synthetase family. Type-1 seryl-tRNA synthetase subfamily. Homodimer. The tRNA molecule binds across the dimer.

The protein resides in the cytoplasm. The enzyme catalyses tRNA(Ser) + L-serine + ATP = L-seryl-tRNA(Ser) + AMP + diphosphate + H(+). The catalysed reaction is tRNA(Sec) + L-serine + ATP = L-seryl-tRNA(Sec) + AMP + diphosphate + H(+). It functions in the pathway aminoacyl-tRNA biosynthesis; selenocysteinyl-tRNA(Sec) biosynthesis; L-seryl-tRNA(Sec) from L-serine and tRNA(Sec): step 1/1. Functionally, catalyzes the attachment of serine to tRNA(Ser). Is also able to aminoacylate tRNA(Sec) with serine, to form the misacylated tRNA L-seryl-tRNA(Sec), which will be further converted into selenocysteinyl-tRNA(Sec). The protein is Serine--tRNA ligase of Haemophilus influenzae (strain PittGG).